Here is a 108-residue protein sequence, read N- to C-terminus: uncharacterized protein (108 aa).

Residues Met1–Asp10 are compositionally biased toward basic and acidic residues. The interval Met1–Gln27 is disordered. The segment covering Ile12–Asn22 has biased composition (polar residues).

This is an uncharacterized protein from Saccharomyces cerevisiae (strain ATCC 204508 / S288c) (Baker's yeast).